Consider the following 599-residue polypeptide: Flap endonuclease GEN-like 1 (599 aa).

The segment at 1–96 is N-domain; it reads MGVGGNFWDL…ISRFFRSSGI (96 aa). Positions 2-95 are XPG-N domain; that stretch reads GVGGNFWDLL…RISRFFRSSG (94 aa). Mg(2+) contacts are provided by aspartate 31, aspartate 75, glutamate 140, glutamate 142, aspartate 161, aspartate 163, and aspartate 213. Residues 128–213 form an XPG-I domain region; it reads ELLGIPVLKA…IAISLLVGND (86 aa). The segment at 128-217 is I-domain; sequence ELLGIPVLKA…LLVGNDYDSG (90 aa). Residues 213-407 are 5'-3' exonuclease domain; the sequence is DYDSGGVLGI…LLPMLSTIYL (195 aa). 2 disordered regions span residues 522-545 and 559-599; these read RESK…MGVQ and AAGQ…LLFG. Polar residues-rich tracts occupy residues 563–572 and 580–590; these read SIETGGSSKA and ATSTSSSNLTK.

It belongs to the XPG/RAD2 endonuclease family. GEN subfamily. Mg(2+) is required as a cofactor.

Its subcellular location is the nucleus. In terms of biological role, endonuclease which cleaves flap structures at the junction between single-stranded DNA and double-stranded DNA with a specific cleavage site in the 5' overhang strand exactly one nucleotide 3' of the branch point. Structure- and sequence-specific nuclease that resolves holliday junctions (HJs) by symmetrically oriented incisions in two opposing strands near the junction point, thus leading to ligatable products; HJs are physical links between homologous DNA molecules that arise as central intermediary structures during homologous recombination and repair in meiotic and somatic cells. Structure-specific nuclease with 5'-flap endonuclease activity, preferentially cleaving static flaps 5' overhang strand exactly one nucleotide in the 3' direction of the branch point. Also able to cleave double-stranded flap strand 1 exactly at the branch point. The protein is Flap endonuclease GEN-like 1 of Arabidopsis thaliana (Mouse-ear cress).